Here is a 313-residue protein sequence, read N- to C-terminus: Formimidoylglutamase (313 aa).

The Mn(2+) site is built by H130, D155, H157, D159, D241, and D243.

This sequence belongs to the arginase family. It depends on Mn(2+) as a cofactor.

The enzyme catalyses N-formimidoyl-L-glutamate + H2O = formamide + L-glutamate. Its pathway is amino-acid degradation; L-histidine degradation into L-glutamate; L-glutamate from N-formimidoyl-L-glutamate (hydrolase route): step 1/1. Functionally, catalyzes the conversion of N-formimidoyl-L-glutamate to L-glutamate and formamide. The chain is Formimidoylglutamase from Citrobacter koseri (strain ATCC BAA-895 / CDC 4225-83 / SGSC4696).